Here is a 477-residue protein sequence, read N- to C-terminus: Adenylyl cyclase-associated protein 2 (477 aa).

Ala-2 carries the N-acetylalanine modification. Disordered regions lie at residues 224–262 and 274–324; these read SILS…PSRS and ITKG…HAPV. Over residues 231-248 the composition is skewed to pro residues; the sequence is GLPPPPPPPPPPGPPPPF. Residues 300–318 are compositionally biased toward low complexity; that stretch reads RSPTKTRTPSPTSSKSNSP. 2 positions are modified to phosphoserine: Ser-301 and Ser-309. One can recognise a C-CAP/cofactor C-like domain in the interval 318–455; that stretch reads PQKHAPVLEL…QGDDYREFPI (138 aa).

This sequence belongs to the CAP family. Found at relatively high levels in testes, at moderate levels in brain, heart and skeletal muscle, at lower levels in lung, skin, kidney and small intestine, and is undetectable in liver or spleen.

Its subcellular location is the cell membrane. In terms of biological role, involved in the regulation of actin polymerization. In Rattus norvegicus (Rat), this protein is Adenylyl cyclase-associated protein 2 (Cap2).